We begin with the raw amino-acid sequence, 141 residues long: Large ribosomal subunit protein uL16 (141 aa).

Belongs to the universal ribosomal protein uL16 family. Part of the 50S ribosomal subunit.

Functionally, binds 23S rRNA and is also seen to make contacts with the A and possibly P site tRNAs. This Campylobacter concisus (strain 13826) protein is Large ribosomal subunit protein uL16.